Consider the following 367-residue polypeptide: Glutamate 5-kinase (367 aa).

Residue K17 participates in ATP binding. Substrate is bound by residues S57, D144, and N156. ATP-binding positions include 176 to 177 (SD) and 217 to 223 (TGGMTSK). The 79-residue stretch at 279–357 (AGALTLDEGA…SELPGELRRP (79 aa)) folds into the PUA domain.

This sequence belongs to the glutamate 5-kinase family.

The protein resides in the cytoplasm. The enzyme catalyses L-glutamate + ATP = L-glutamyl 5-phosphate + ADP. It functions in the pathway amino-acid biosynthesis; L-proline biosynthesis; L-glutamate 5-semialdehyde from L-glutamate: step 1/2. Catalyzes the transfer of a phosphate group to glutamate to form L-glutamate 5-phosphate. The protein is Glutamate 5-kinase of Mycolicibacterium paratuberculosis (strain ATCC BAA-968 / K-10) (Mycobacterium paratuberculosis).